A 610-amino-acid polypeptide reads, in one-letter code: Butyryl-CoA dehydrogenase Swol_1933 (610 aa).

The active-site Proton acceptor is Glu-451.

Belongs to the acyl-CoA dehydrogenase family. FAD is required as a cofactor.

It localises to the cytoplasm. It catalyses the reaction butanoyl-CoA + oxidized [electron-transfer flavoprotein] + H(+) = (2E)-butenoyl-CoA + reduced [electron-transfer flavoprotein]. It carries out the reaction a short-chain 2,3-saturated fatty acyl-CoA + oxidized [electron-transfer flavoprotein] + H(+) = a short-chain (2E)-enoyl-CoA + reduced [electron-transfer flavoprotein]. It participates in lipid metabolism; butanoate metabolism. Involved in syntrophic growth of S.wolfei with butyrate, as part of the butyrate oxidation pathway. Catalyzes the oxidation of butanoyl-CoA to crotonyl-CoA. Probably passes the electrons released by this reaction on to electron-transfer flavoproteins (EtfAB) to finally generate hydrogen and/or formate. This chain is Butyryl-CoA dehydrogenase Swol_1933, found in Syntrophomonas wolfei subsp. wolfei (strain DSM 2245B / Goettingen).